A 299-amino-acid chain; its full sequence is tRNA-cytidine(32) 2-sulfurtransferase (299 aa).

Residues 56-61 (SGGKDS) carry the PP-loop motif motif. [4Fe-4S] cluster-binding residues include Cys-131, Cys-134, and Cys-222.

This sequence belongs to the TtcA family. In terms of assembly, homodimer. Requires Mg(2+) as cofactor. It depends on [4Fe-4S] cluster as a cofactor.

The protein resides in the cytoplasm. The enzyme catalyses cytidine(32) in tRNA + S-sulfanyl-L-cysteinyl-[cysteine desulfurase] + AH2 + ATP = 2-thiocytidine(32) in tRNA + L-cysteinyl-[cysteine desulfurase] + A + AMP + diphosphate + H(+). Its pathway is tRNA modification. Functionally, catalyzes the ATP-dependent 2-thiolation of cytidine in position 32 of tRNA, to form 2-thiocytidine (s(2)C32). The sulfur atoms are provided by the cysteine/cysteine desulfurase (IscS) system. This chain is tRNA-cytidine(32) 2-sulfurtransferase, found in Xylella fastidiosa (strain M12).